A 341-amino-acid polypeptide reads, in one-letter code: HTH-type transcriptional repressor PurR (341 aa).

Residues 2-56 enclose the HTH lacI-type domain; it reads ATIKDVAKRANVSTTTVSHVINKTRFVSEETRNAVWAAIKELHYSPSAVARSLKV. The segment at residues 4 to 23 is a DNA-binding region (H-T-H motif); the sequence is IKDVAKRANVSTTTVSHVIN. A DNA-binding region spans residues 48 to 56; the sequence is SAVARSLKV. Residues tyrosine 73, arginine 190, threonine 192, phenylalanine 221, and aspartate 275 each contribute to the hypoxanthine site.

In terms of assembly, homodimer.

It functions in the pathway purine metabolism; purine nucleotide biosynthesis [regulation]. Its function is as follows. Is the main repressor of the genes involved in the de novo synthesis of purine nucleotides, regulating purB, purC, purEK, purF, purHD, purL, purMN and guaBA expression. PurR is allosterically activated to bind its cognate DNA by binding the purine corepressors, hypoxanthine or guanine, thereby effecting transcription repression. This is HTH-type transcriptional repressor PurR from Escherichia coli O139:H28 (strain E24377A / ETEC).